Consider the following 402-residue polypeptide: Phosphoglycerate kinase (402 aa).

Residues 24-26 (DFN), Arg40, 63-66 (HFGR), Arg122, and Arg155 each bind substrate. ATP is bound by residues Lys206, Gly297, Glu328, and 357–360 (GGDS).

It belongs to the phosphoglycerate kinase family. In terms of assembly, monomer.

It localises to the cytoplasm. It carries out the reaction (2R)-3-phosphoglycerate + ATP = (2R)-3-phospho-glyceroyl phosphate + ADP. Its pathway is carbohydrate degradation; glycolysis; pyruvate from D-glyceraldehyde 3-phosphate: step 2/5. This Synechococcus elongatus (strain ATCC 33912 / PCC 7942 / FACHB-805) (Anacystis nidulans R2) protein is Phosphoglycerate kinase.